The primary structure comprises 113 residues: Holo-[acyl-carrier-protein] synthase (113 aa).

Mg(2+) contacts are provided by D5 and E50.

It belongs to the P-Pant transferase superfamily. AcpS family. Mg(2+) serves as cofactor.

Its subcellular location is the cytoplasm. The enzyme catalyses apo-[ACP] + CoA = holo-[ACP] + adenosine 3',5'-bisphosphate + H(+). Its function is as follows. Transfers the 4'-phosphopantetheine moiety from coenzyme A to a Ser of acyl-carrier-protein. In Nautilia profundicola (strain ATCC BAA-1463 / DSM 18972 / AmH), this protein is Holo-[acyl-carrier-protein] synthase.